Here is a 471-residue protein sequence, read N- to C-terminus: Tryptophanase (471 aa).

Position 270 is an N6-(pyridoxal phosphate)lysine (Lys-270).

It belongs to the beta-eliminating lyase family. In terms of assembly, homotetramer. It depends on pyridoxal 5'-phosphate as a cofactor.

It catalyses the reaction L-tryptophan + H2O = indole + pyruvate + NH4(+). It functions in the pathway amino-acid degradation; L-tryptophan degradation via pyruvate pathway; indole and pyruvate from L-tryptophan: step 1/1. The polypeptide is Tryptophanase (Histophilus somni (strain 2336) (Haemophilus somnus)).